Here is a 932-residue protein sequence, read N- to C-terminus: Glycine dehydrogenase (decarboxylating) (932 aa).

Lys685 carries the post-translational modification N6-(pyridoxal phosphate)lysine.

This sequence belongs to the GcvP family. As to quaternary structure, the glycine cleavage system is composed of four proteins: P, T, L and H. Pyridoxal 5'-phosphate serves as cofactor.

It catalyses the reaction N(6)-[(R)-lipoyl]-L-lysyl-[glycine-cleavage complex H protein] + glycine + H(+) = N(6)-[(R)-S(8)-aminomethyldihydrolipoyl]-L-lysyl-[glycine-cleavage complex H protein] + CO2. The glycine cleavage system catalyzes the degradation of glycine. The P protein binds the alpha-amino group of glycine through its pyridoxal phosphate cofactor; CO(2) is released and the remaining methylamine moiety is then transferred to the lipoamide cofactor of the H protein. This Brucella abortus (strain S19) protein is Glycine dehydrogenase (decarboxylating).